An 80-amino-acid polypeptide reads, in one-letter code: Cell division protein ZapB (80 aa).

A coiled-coil region spans residues 3–80 (FEVLEQLESK…ALLGKMDEVE (78 aa)).

The protein belongs to the ZapB family. As to quaternary structure, homodimer. The ends of the coiled-coil dimer bind to each other, forming polymers. Interacts with FtsZ.

Its subcellular location is the cytoplasm. Non-essential, abundant cell division factor that is required for proper Z-ring formation. It is recruited early to the divisome by direct interaction with FtsZ, stimulating Z-ring assembly and thereby promoting cell division earlier in the cell cycle. Its recruitment to the Z-ring requires functional FtsA or ZipA. The protein is Cell division protein ZapB of Vibrio parahaemolyticus serotype O3:K6 (strain RIMD 2210633).